We begin with the raw amino-acid sequence, 1085 residues long: Kinesin-like protein cut7 (1085 aa).

A disordered region spans residues 1-70 (MAPRVAPGGS…TDHALHDENE (70 aa)). Residues 24-37 (PVSTPNSHFRSASN) are compositionally biased toward polar residues. The Kinesin motor domain maps to 72 to 421 (NINVVVRVRG…LEYAARAKSI (350 aa)). An ATP-binding site is contributed by 159–166 (GQTGTGKT). 3 coiled-coil regions span residues 436–604 (LIKD…WNLK), 715–740 (ISSE…LRSL), and 897–955 (LALA…DSIK). 2 consecutive repeats follow at residues 987–998 (DESLCNLETTIE) and 999–1010 (DTSLVKLETTGD). The residue at position 1011 (threonine 1011) is a Phosphothreonine; by CDC2. A disordered region spans residues 1049–1085 (YTSSNQTNEPDVYDKPSNSSRTSLLRSSRSAYSKMKR). Positions 1065-1078 (SNSSRTSLLRSSRS) are enriched in low complexity.

Belongs to the TRAFAC class myosin-kinesin ATPase superfamily. Kinesin family. BimC subfamily.

It localises to the cytoplasm. The protein localises to the cytoskeleton. Its subcellular location is the microtubule organizing center. It is found in the spindle pole body. Its function is as follows. Could be a spindle pole body motor. On transition from G2 to M phase of the cell cycle, the spindle pole body duplicates; the daughter pole bodies seed microtubules which interdigitate to form a short spindle that elongates to span the nucleus at metaphase. Mutations at cut7 block spindle formation. This chain is Kinesin-like protein cut7 (cut7), found in Schizosaccharomyces pombe (strain 972 / ATCC 24843) (Fission yeast).